A 547-amino-acid polypeptide reads, in one-letter code: Chaperonin GroEL (547 aa).

Residues 30–33, Lys-51, 87–91, Gly-415, and Asp-496 contribute to the ATP site; these read TLGP and DGTTT. Residues 527–547 form a disordered region; sequence SDKEEPMPMRGGMGGMGGMDF. The segment covering 537 to 547 has biased composition (gly residues); sequence GGMGGMGGMDF.

This sequence belongs to the chaperonin (HSP60) family. Forms a cylinder of 14 subunits composed of two heptameric rings stacked back-to-back. Interacts with the co-chaperonin GroES.

The protein resides in the cytoplasm. It catalyses the reaction ATP + H2O + a folded polypeptide = ADP + phosphate + an unfolded polypeptide.. Functionally, together with its co-chaperonin GroES, plays an essential role in assisting protein folding. The GroEL-GroES system forms a nano-cage that allows encapsulation of the non-native substrate proteins and provides a physical environment optimized to promote and accelerate protein folding. This is Chaperonin GroEL from Rickettsia massiliae (strain Mtu5).